The chain runs to 400 residues: CinA-like protein (400 aa).

This sequence belongs to the CinA family.

The polypeptide is CinA-like protein (Escherichia coli O9:H4 (strain HS)).